Consider the following 2177-residue polypeptide: Brefeldin A-inhibited guanine nucleotide-exchange protein 3 (2177 aa).

Residues 282-295 (TSSTSTSLESDSAS) are compositionally biased toward low complexity. The tract at residues 282–301 (TSSTSTSLESDSASPGVSDH) is disordered. S471 is subject to Phosphoserine. Over residues 511-524 (TGQTTLEGELGQTT) the composition is skewed to polar residues. 3 disordered regions span residues 511 to 542 (TGQT…PAIP), 617 to 636 (AAEK…DNCS), and 1031 to 1076 (DGAS…LSTA). The region spanning 583-796 (RTRSYGSRYS…EELYHQVLDR (214 aa)) is the SEC7 domain. Basic and acidic residues predominate over residues 618-627 (AEKDSGRSDV). A phosphoserine mark is found at S632 and S636. Residues 1032–1047 (GASQPPLTISQPQKAT) are compositionally biased toward polar residues. S1049 is modified (phosphoserine). The chain crosses the membrane as a helical span at residues 1492 to 1512 (GPGFGIYAVVHLLLPVMSVWL). Disordered stretches follow at residues 1848 to 1877 (STDS…GKEK), 1946 to 2004 (ESST…RKKE), and 2033 to 2064 (KQQH…SPLL). Basic and acidic residues predominate over residues 1960–1974 (TPSEDDRSQSREHMG). At S1991 the chain carries Phosphoserine. Composition is skewed to basic and acidic residues over residues 1993-2004 (KVEKKDPSRKKE) and 2043-2052 (KEVKVEKKGE). Phosphoserine occurs at positions 2079, 2081, 2095, 2101, and 2103. The interval 2082–2103 (AGPELLRQDKRPRSGSTGSSLS) is disordered.

Interacts with PHB2. As to expression, expressed in breast cancer cell lines. Not expressed in normal tissues such as duct, mammary gland, lung, heart, liver, kidnay, bone marrow.

It is found in the cytoplasm. The protein resides in the cytoplasmic vesicle. It localises to the secretory vesicle. Its subcellular location is the secretory vesicle membrane. Functionally, participates in the regulation of systemic glucose homeostasis, where it negatively regulates insulin granule biogenesis in pancreatic islet beta cells. Also regulates glucagon granule production in pancreatic alpha cells. Inhibits nuclear translocation of the transcriptional coregulator PHB2 and may enhance estrogen receptor alpha (ESR1) transcriptional activity in breast cancer cells. The polypeptide is Brefeldin A-inhibited guanine nucleotide-exchange protein 3 (Homo sapiens (Human)).